The following is a 159-amino-acid chain: Na(+)/H(+) antiporter subunit E1 (159 aa).

The next 4 membrane-spanning stretches (helical) occupy residues 1 to 21 (MAVQ…VTNS), 27 to 47 (FVLG…VLPG), 49 to 69 (FYVI…IELI), and 101 to 121 (WQIV…VLGV).

This sequence belongs to the CPA3 antiporters (TC 2.A.63) subunit E family. In terms of assembly, may form a heterooligomeric complex that consists of seven subunits: mnhA1, mnhB1, mnhC1, mnhD1, mnhE1, mnhF1 and mnhG1.

It localises to the cell membrane. Functionally, mnh complex is a Na(+)/H(+) antiporter involved in Na(+) excretion. This chain is Na(+)/H(+) antiporter subunit E1 (mnhE1), found in Staphylococcus aureus (strain Mu3 / ATCC 700698).